The following is a 115-amino-acid chain: Ribonuclease P protein component (115 aa).

This sequence belongs to the RnpA family. Consists of a catalytic RNA component (M1 or rnpB) and a protein subunit.

The enzyme catalyses Endonucleolytic cleavage of RNA, removing 5'-extranucleotides from tRNA precursor.. Its function is as follows. RNaseP catalyzes the removal of the 5'-leader sequence from pre-tRNA to produce the mature 5'-terminus. It can also cleave other RNA substrates such as 4.5S RNA. The protein component plays an auxiliary but essential role in vivo by binding to the 5'-leader sequence and broadening the substrate specificity of the ribozyme. The sequence is that of Ribonuclease P protein component from Staphylococcus epidermidis (strain ATCC 35984 / DSM 28319 / BCRC 17069 / CCUG 31568 / BM 3577 / RP62A).